The following is a 408-amino-acid chain: MSLSVTRENFDEWMVPVYVPAPFIPVRGEGSRLWDQQGKEYIDFAGGIAVNALGHAHPALREALNEQANRFWHTGNGYTNEPALRLAKKLIDATFAERVFFCNSGAEANEAALKLARKYAHDRVGNHKSGIVAFKNAFHGRTLFTVSAGGQPTYSQDFAPLPPDIRHAAYNDLNSASALIDDNTCAVIVEPVQGEGGVIPATNAFLQGLRELCDRHQALLIFDEVQTGVGRTGELYAYMHYGVTPDILTTAKALGGGFPIGAMLTTQDYASVMTPGTHGTTYGGNPLATAVAGKVLDIINTPEMQNGVRQRHDAFIERLNTINVRFGMFSEIRGLGLLLGCVLQTEFAGKAKLIAQEAAKAGVMVLIAGGDVVRFAPALNVSDEEIATGLDRFALACERLQAGGASCG.

The residue at position 252 (K252) is an N6-(pyridoxal phosphate)lysine.

It belongs to the class-III pyridoxal-phosphate-dependent aminotransferase family. AstC subfamily. It depends on pyridoxal 5'-phosphate as a cofactor.

It catalyses the reaction N(2)-succinyl-L-ornithine + 2-oxoglutarate = N-succinyl-L-glutamate 5-semialdehyde + L-glutamate. It participates in amino-acid degradation; L-arginine degradation via AST pathway; L-glutamate and succinate from L-arginine: step 3/5. Its function is as follows. Catalyzes the transamination of N(2)-succinylornithine and alpha-ketoglutarate into N(2)-succinylglutamate semialdehyde and glutamate. Can also act as an acetylornithine aminotransferase. The chain is Succinylornithine transaminase from Salmonella typhi.